Here is a 452-residue protein sequence, read N- to C-terminus: UDP-glycosyltransferase 76D1 (452 aa).

UDP-alpha-D-glucose contacts are provided by residues serine 269, 329 to 331 (APQ), 346 to 354 (HGGWNSCLE), and 368 to 371 (SGDQ).

The protein belongs to the UDP-glycosyltransferase family.

Possesses low quercetin 7-O-glucosyltransferase activity in vitro. The protein is UDP-glycosyltransferase 76D1 (UGT76D1) of Arabidopsis thaliana (Mouse-ear cress).